The chain runs to 424 residues: Probable methyltransferase EP424R (424 aa).

An Adrift-type SAM-dependent 2'-O-MTase domain is found at 103–315 (QIVTNAWLKM…TYIVGKNRLR (213 aa)). Residues Gly135 and Asp228 each coordinate S-adenosyl-L-methionine. The Proton acceptor role is filled by Lys268.

The protein resides in the virion. This is Probable methyltransferase EP424R from Ornithodoros (relapsing fever ticks).